The primary structure comprises 293 residues: Probable porphobilinogen deaminase (293 aa).

Position 233 is an S-(dipyrrolylmethanemethyl)cysteine (Cys233).

It belongs to the HMBS family. Dipyrromethane is required as a cofactor.

The enzyme catalyses 4 porphobilinogen + H2O = hydroxymethylbilane + 4 NH4(+). It functions in the pathway porphyrin-containing compound metabolism; protoporphyrin-IX biosynthesis; coproporphyrinogen-III from 5-aminolevulinate: step 2/4. Functionally, tetrapolymerization of the monopyrrole PBG into the hydroxymethylbilane pre-uroporphyrinogen in several discrete steps. This is Probable porphobilinogen deaminase from Saccharolobus islandicus (strain L.S.2.15 / Lassen #1) (Sulfolobus islandicus).